The primary structure comprises 426 residues: Phosphoribosylamine--glycine ligase (426 aa).

The ATP-grasp domain occupies 113–320 (KSLMTEAKIP…LLELLYRAST (208 aa)). ATP is bound at residue 139–200 (LESKSIPIVI…EEFMEGQEAS (62 aa)). Residues glutamate 290 and asparagine 292 each coordinate Mg(2+).

Belongs to the GARS family. Mg(2+) is required as a cofactor. The cofactor is Mn(2+).

It catalyses the reaction 5-phospho-beta-D-ribosylamine + glycine + ATP = N(1)-(5-phospho-beta-D-ribosyl)glycinamide + ADP + phosphate + H(+). The protein operates within purine metabolism; IMP biosynthesis via de novo pathway; N(1)-(5-phospho-D-ribosyl)glycinamide from 5-phospho-alpha-D-ribose 1-diphosphate: step 2/2. The chain is Phosphoribosylamine--glycine ligase from Leptospira interrogans serogroup Icterohaemorrhagiae serovar Lai (strain 56601).